We begin with the raw amino-acid sequence, 427 residues long: Ribose-phosphate pyrophosphokinase 1 (427 aa).

Residues Asp128, His130, and Asp143 each contribute to the Mg(2+) site. Phosphoserine occurs at positions 199, 218, 271, and 295.

This sequence belongs to the ribose-phosphate pyrophosphokinase family.

The protein localises to the cytoplasm. The enzyme catalyses D-ribose 5-phosphate + ATP = 5-phospho-alpha-D-ribose 1-diphosphate + AMP + H(+). Its pathway is metabolic intermediate biosynthesis; 5-phospho-alpha-D-ribose 1-diphosphate biosynthesis; 5-phospho-alpha-D-ribose 1-diphosphate from D-ribose 5-phosphate (route I): step 1/1. 5-phosphoribose 1-diphosphate synthase involved in nucleotide, histidine, and tryptophan biosynthesis. Active in heteromultimeric complexes with other 5-phosphoribose 1-diphosphate synthases (PRS2, PRS3, PRS4 and PRS5). The chain is Ribose-phosphate pyrophosphokinase 1 (PRS1) from Saccharomyces cerevisiae (strain ATCC 204508 / S288c) (Baker's yeast).